A 386-amino-acid chain; its full sequence is Chaperone protein DnaJ (386 aa).

A J domain is found at 4 to 68 (NFYDVLGVSR…QKRQQYDQLG (65 aa)). Basic and acidic residues-rich tracts occupy residues 22–35 (KAYR…HPDV) and 43–79 (ERFK…DKRG). The interval 22-132 (KAYRKQAAEH…GGNRPRQGQD (111 aa)) is disordered. 2 stretches are compositionally biased toward gly residues: residues 80-104 (ATGG…GAGG) and 113-125 (FGGG…GGGN). Residues 147 to 229 (GATKEVTLTR…CGGDGVVREE (83 aa)) form a CR-type zinc finger. Cysteine 160, cysteine 163, cysteine 177, cysteine 180, cysteine 203, cysteine 206, cysteine 217, and cysteine 220 together coordinate Zn(2+). 4 CXXCXGXG motif repeats span residues 160–167 (CDTCDGAG), 177–184 (CSQCNGRG), 203–210 (CPRCEGSG), and 217–224 (CADCGGDG).

It belongs to the DnaJ family. As to quaternary structure, homodimer. It depends on Zn(2+) as a cofactor.

It is found in the cytoplasm. In terms of biological role, participates actively in the response to hyperosmotic and heat shock by preventing the aggregation of stress-denatured proteins and by disaggregating proteins, also in an autonomous, DnaK-independent fashion. Unfolded proteins bind initially to DnaJ; upon interaction with the DnaJ-bound protein, DnaK hydrolyzes its bound ATP, resulting in the formation of a stable complex. GrpE releases ADP from DnaK; ATP binding to DnaK triggers the release of the substrate protein, thus completing the reaction cycle. Several rounds of ATP-dependent interactions between DnaJ, DnaK and GrpE are required for fully efficient folding. Also involved, together with DnaK and GrpE, in the DNA replication of plasmids through activation of initiation proteins. The protein is Chaperone protein DnaJ of Halorubrum lacusprofundi (strain ATCC 49239 / DSM 5036 / JCM 8891 / ACAM 34).